The following is a 500-amino-acid chain: Ent-cassadiene C11-alpha-hydroxylase 1 (500 aa).

A helical transmembrane segment spans residues 4–24 (SQVWLLWGALSVAVLFYLSTL). Heme is bound at residue Cys442.

The protein belongs to the cytochrome P450 family. Requires heme as cofactor.

It localises to the membrane. It catalyses the reaction ent-cassa-12,15-diene + reduced [NADPH--hemoprotein reductase] + O2 = ent-11beta-hydroxycassa-12,15-diene + oxidized [NADPH--hemoprotein reductase] + H2O + H(+). Functionally, enzyme of the diterpenoid metabolism involved in the biosynthesis of antibacterial oryzalides such as phytocassane. Can use ent-cassadiene as substrate, but not C11-alpha-hydroxy-ent-cassadiene, ent-pimaradiene, ent-sandaracopimaradiene, ent-kaurene, ent-isokaurene, syn-pimaradiene, syn-stemarene, syn-stemodene. The polypeptide is Ent-cassadiene C11-alpha-hydroxylase 1 (Oryza sativa subsp. japonica (Rice)).